The chain runs to 156 residues: 6,7-dimethyl-8-ribityllumazine synthase (156 aa).

Residues Phe-23, 57–59 (AYE), and 81–83 (AII) each bind 5-amino-6-(D-ribitylamino)uracil. 86–87 (GT) lines the (2S)-2-hydroxy-3-oxobutyl phosphate pocket. The active-site Proton donor is the His-89. Phe-114 lines the 5-amino-6-(D-ribitylamino)uracil pocket. Arg-128 lines the (2S)-2-hydroxy-3-oxobutyl phosphate pocket.

It belongs to the DMRL synthase family.

It carries out the reaction (2S)-2-hydroxy-3-oxobutyl phosphate + 5-amino-6-(D-ribitylamino)uracil = 6,7-dimethyl-8-(1-D-ribityl)lumazine + phosphate + 2 H2O + H(+). Its pathway is cofactor biosynthesis; riboflavin biosynthesis; riboflavin from 2-hydroxy-3-oxobutyl phosphate and 5-amino-6-(D-ribitylamino)uracil: step 1/2. In terms of biological role, catalyzes the formation of 6,7-dimethyl-8-ribityllumazine by condensation of 5-amino-6-(D-ribitylamino)uracil with 3,4-dihydroxy-2-butanone 4-phosphate. This is the penultimate step in the biosynthesis of riboflavin. This Helicobacter pylori (strain P12) protein is 6,7-dimethyl-8-ribityllumazine synthase.